The following is a 280-amino-acid chain: Putative protein-tyrosine sulfotransferase (280 aa).

16–20 (RSGTT) is a binding site for 3'-phosphoadenylyl sulfate. Residues cysteine 34 and cysteine 89 are joined by a disulfide bond. The Proton donor/acceptor role is filled by glutamate 37. A glycan (N-linked (GlcNAc...) asparagine) is linked at asparagine 57. 3'-phosphoadenylyl sulfate contacts are provided by arginine 116, serine 124, and arginine 128. N-linked (GlcNAc...) asparagine glycosylation occurs at asparagine 136. Cysteines 158 and 165 form a disulfide. 3'-phosphoadenylyl sulfate-binding positions include tyrosine 170 and 215 to 224 (SASQVKNSIN).

The protein belongs to the protein sulfotransferase family.

It carries out the reaction L-tyrosyl-[protein] + 3'-phosphoadenylyl sulfate = O-sulfo-L-tyrosine-[protein] + adenosine 3',5'-bisphosphate + H(+). Catalyzes the O-sulfation of tyrosine residues within acidic motifs of polypeptides, using 3'-phosphoadenylyl sulfate (PAPS) as cosubstrate. This is Putative protein-tyrosine sulfotransferase from Caenorhabditis briggsae.